The sequence spans 775 residues: GRIP and coiled-coil domain-containing protein 1 (775 aa).

Positions 13–61 (SKKDLLETIETQKKQLLQYQARLKDVVRAYKSLLKEKEALEASIKVLSV) form a coiled coil. Basic and acidic residues predominate over residues 84–93 (DDRCSTHSED). Disordered regions lie at residues 84–153 (DDRC…AGGE) and 614–639 (GLPGRRSPVGGGGPGDPADTSSSDSL). Low complexity-rich tracts occupy residues 94–110 (STGTATSLDTAASLTST), 133–147 (ASWSESGVSSSSGDG), and 629–638 (DPADTSSSDS). Positions 153-763 (EVDKRLHQLK…PEEKQVIMRL (611 aa)) form a coiled coil. Residues 713 to 763 (QSREGANLEYLKNIIYRFLTLPDSLGRQQTLTAILTILHFSPEEKQVIMRL) form the GRIP domain.

The protein localises to the cytoplasm. It is found in the golgi apparatus membrane. In terms of biological role, probably involved in maintaining Golgi structure. The sequence is that of GRIP and coiled-coil domain-containing protein 1 (GCC1) from Homo sapiens (Human).